The chain runs to 357 residues: MAPTVDIKNLIYPWLIEAEEYSFNDINDGIRLHLNESPFPPPDFIIEEVKKYLHLGNRYQHPSLLERLRELMAEYNRVEPKNIYPTPGGDGALRAVFYNLIQTGDKVVINNPSYSMYKVYASVRGLKLTRVNLIENDNWWKMNFEKFLDEAKNARLVIIDDPNNPTGSPMLKAEEDKVRALAESINGFILIDEAYYEFSGYTVAKLINKYPNLLIVRTLSKAFSLASYRVGYLIGNEEVIKNLMKGATPFDISLPGYIAGITALENPSYVRKIVEEITKNREYLLNGLRKLGLKVYNSLTNFVFVKDERDLLSPLLNKGVAIRKPIIGYYRISVGTKEQVDTLLKYLGEIIENGNSK.

Position 221 is an N6-(pyridoxal phosphate)lysine (Lys221).

Belongs to the class-II pyridoxal-phosphate-dependent aminotransferase family. Histidinol-phosphate aminotransferase subfamily. Pyridoxal 5'-phosphate serves as cofactor.

The enzyme catalyses L-histidinol phosphate + 2-oxoglutarate = 3-(imidazol-4-yl)-2-oxopropyl phosphate + L-glutamate. It participates in amino-acid biosynthesis; L-histidine biosynthesis; L-histidine from 5-phospho-alpha-D-ribose 1-diphosphate: step 7/9. The polypeptide is Histidinol-phosphate aminotransferase (hisC) (Sulfurisphaera tokodaii (strain DSM 16993 / JCM 10545 / NBRC 100140 / 7) (Sulfolobus tokodaii)).